The following is a 195-amino-acid chain: Imidazoleglycerol-phosphate dehydratase (195 aa).

Belongs to the imidazoleglycerol-phosphate dehydratase family.

It is found in the cytoplasm. The catalysed reaction is D-erythro-1-(imidazol-4-yl)glycerol 3-phosphate = 3-(imidazol-4-yl)-2-oxopropyl phosphate + H2O. The protein operates within amino-acid biosynthesis; L-histidine biosynthesis; L-histidine from 5-phospho-alpha-D-ribose 1-diphosphate: step 6/9. This chain is Imidazoleglycerol-phosphate dehydratase, found in Burkholderia thailandensis (strain ATCC 700388 / DSM 13276 / CCUG 48851 / CIP 106301 / E264).